The sequence spans 203 residues: MTEELTPKQAAVLEFIKKSIRQRGYPPSVREIGQEVGLSSSSTVHGYLKKLEEKGYLRRDATKPRAIEVLDNPAGEKVEFINVPVLGRVAAGVPLLAVENREDIFPLPVHFTGSGEFFMLTVRGDSMIEAGILNGDMVVVRRQQDAGNGDIVVALLEEEATVKRLFKENGRIRLQPENRLMEPIYAAEVQILGKVIGLVRKIY.

Positions 29–49 (VREIGQEVGLSSSSTVHGYLK) form a DNA-binding region, H-T-H motif. Active-site for autocatalytic cleavage activity residues include Ser-126 and Lys-163.

Belongs to the peptidase S24 family. As to quaternary structure, homodimer.

It carries out the reaction Hydrolysis of Ala-|-Gly bond in repressor LexA.. Functionally, represses a number of genes involved in the response to DNA damage (SOS response), including recA and lexA. In the presence of single-stranded DNA, RecA interacts with LexA causing an autocatalytic cleavage which disrupts the DNA-binding part of LexA, leading to derepression of the SOS regulon and eventually DNA repair. The protein is LexA repressor of Pelotomaculum thermopropionicum (strain DSM 13744 / JCM 10971 / SI).